A 120-amino-acid chain; its full sequence is Sirohydrochlorin cobaltochelatase (120 aa).

His-9 functions as the Proton acceptor in the catalytic mechanism. His-9 is a Co(2+) binding site. Residues Gln-43 and 68–73 (FAAGTH) each bind substrate. A Co(2+)-binding site is contributed by His-73.

Belongs to the CbiX family. CbiXS subfamily. Homotetramer; dimer of dimers.

The enzyme catalyses Co-sirohydrochlorin + 2 H(+) = sirohydrochlorin + Co(2+). It functions in the pathway cofactor biosynthesis; adenosylcobalamin biosynthesis; cob(II)yrinate a,c-diamide from sirohydrochlorin (anaerobic route): step 1/10. Functionally, catalyzes the insertion of Co(2+) into sirohydrochlorin as part of the anaerobic pathway to cobalamin biosynthesis. This Sulfurisphaera tokodaii (strain DSM 16993 / JCM 10545 / NBRC 100140 / 7) (Sulfolobus tokodaii) protein is Sirohydrochlorin cobaltochelatase.